The sequence spans 414 residues: 26S proteasome regulatory subunit 8 homolog (414 aa).

197-204 (GPPGTGKT) contributes to the ATP binding site.

This sequence belongs to the AAA ATPase family.

It is found in the cytoplasm. It localises to the nucleus. In terms of biological role, the 26S proteasome is involved in the ATP-dependent degradation of ubiquitinated proteins. The regulatory (or ATPase) complex confers ATP dependency and substrate specificity to the 26S complex. This is 26S proteasome regulatory subunit 8 homolog from Naegleria fowleri (Brain eating amoeba).